The primary structure comprises 157 residues: Protein Smg homolog (157 aa).

It belongs to the Smg family.

The sequence is that of Protein Smg homolog from Shewanella woodyi (strain ATCC 51908 / MS32).